Here is a 250-residue protein sequence, read N- to C-terminus: Probable aquaporin TIP-type RB7-5A (250 aa).

2 consecutive transmembrane segments (helical) span residues 20–42 (AYVA…AIAY) and 55–77 (GLVA…AANI). The NPA 1 signature appears at 83-85 (NPA). A run of 3 helical transmembrane segments spans residues 97-119 (TILT…CLLL), 140-162 (LQGV…ATAA), and 172-194 (IAPI…FSGG). The short motif at 197 to 199 (NPA) is the NPA 2 element. A helical transmembrane segment spans residues 215-237 (WIYWAGPLIGGGLAGFIYGDVFI).

This sequence belongs to the MIP/aquaporin (TC 1.A.8) family. TIP (TC 1.A.8.10) subfamily. Roots.

The protein resides in the vacuole membrane. Channel protein in tonoplast. These proteins may allow the diffusion of amino acids and/or peptides from the vacuolar compartment to the cytoplasm. This Nicotiana tabacum (Common tobacco) protein is Probable aquaporin TIP-type RB7-5A.